The chain runs to 56 residues: Large ribosomal subunit protein bL32 (56 aa).

Residues 1 to 37 form a disordered region; that stretch reads MAVQQNKKSRSKRGMRRSHDALSTAQLSVDATSGELH. Over residues 7–16 the composition is skewed to basic residues; that stretch reads KKSRSKRGMR. Over residues 21-31 the composition is skewed to polar residues; the sequence is ALSTAQLSVDA.

This sequence belongs to the bacterial ribosomal protein bL32 family.

The sequence is that of Large ribosomal subunit protein bL32 from Shewanella pealeana (strain ATCC 700345 / ANG-SQ1).